The chain runs to 206 residues: Large ribosomal subunit protein uL4 (206 aa).

Belongs to the universal ribosomal protein uL4 family. As to quaternary structure, part of the 50S ribosomal subunit.

Functionally, one of the primary rRNA binding proteins, this protein initially binds near the 5'-end of the 23S rRNA. It is important during the early stages of 50S assembly. It makes multiple contacts with different domains of the 23S rRNA in the assembled 50S subunit and ribosome. In terms of biological role, forms part of the polypeptide exit tunnel. The polypeptide is Large ribosomal subunit protein uL4 (Nitratidesulfovibrio vulgaris (strain ATCC 29579 / DSM 644 / CCUG 34227 / NCIMB 8303 / VKM B-1760 / Hildenborough) (Desulfovibrio vulgaris)).